Consider the following 211-residue polypeptide: Orotidine 5'-phosphate decarboxylase (211 aa).

Residues Asp7, Lys29, 57–66 (DLKLADIPNT), Ser109, 162–172 (PGIGAQGGSPV), Gly185, and Arg186 contribute to the substrate site. Residue Lys59 is the Proton donor of the active site.

This sequence belongs to the OMP decarboxylase family. Type 1 subfamily. As to quaternary structure, homodimer.

It catalyses the reaction orotidine 5'-phosphate + H(+) = UMP + CO2. It participates in pyrimidine metabolism; UMP biosynthesis via de novo pathway; UMP from orotate: step 2/2. Catalyzes the decarboxylation of orotidine 5'-monophosphate (OMP) to uridine 5'-monophosphate (UMP). In Pyrococcus furiosus (strain ATCC 43587 / DSM 3638 / JCM 8422 / Vc1), this protein is Orotidine 5'-phosphate decarboxylase.